Reading from the N-terminus, the 1080-residue chain is Protein transport protein SEC24 C (1080 aa).

Residues 1–10 are compositionally biased toward pro residues; it reads MVAPVPPGAP. Disordered regions lie at residues 1 to 189, 201 to 220, and 316 to 367; these read MVAP…SGMI, GSGGFPRGTQFPGAAVTTPQ, and TAMG…SDYV. The segment covering 12–43 has biased composition (polar residues); that stretch reads PNSQQNSGPPNFYPGSQGNSNALADNMQNLSL. Residues 45 to 70 are compositionally biased toward pro residues; the sequence is RPPPMMPGSGPRPPPPFGQSPQPFPQ. Low complexity-rich tracts occupy residues 71–84, 142–160, and 178–189; these read QSPSYGAPQRGPSP, PAASSSGFPAFGPSGSVAA, and GSGMSMPPSGMI. The segment covering 340-356 has biased composition (polar residues); that stretch reads GSSSSPTVFETRQSNQA. Zn(2+)-binding residues include C430, C433, C452, and C455. The interval 430-455 is zinc finger-like; the sequence is CSRCKGYINPFMKFIDQGRKFICNFC.

It belongs to the SEC23/SEC24 family. SEC24 subfamily. As to quaternary structure, component of the coat protein complex II (COPII), composed of at least five proteins: the Sec23/24 complex, the Sec13/31 complex and Sar1. In terms of tissue distribution, mainly expressed at low levels in pollen, leaves, roots and stems.

The protein resides in the cytoplasmic vesicle. The protein localises to the COPII-coated vesicle membrane. Its subcellular location is the endoplasmic reticulum membrane. It is found in the golgi apparatus membrane. Its function is as follows. Component of the coat protein complex II (COPII), that covers ER-derived vesicles involved in transport from the endoplasmic reticulum to the Golgi apparatus. COPII is composed of at least five proteins: the SEC23/24 complex, the SEC13/31 complex, and the protein SAR1. Acts in the cytoplasm to promote the transport of secretory, plasma membrane, and vacuolar proteins from the endoplasmic reticulum to the Golgi complex. In Arabidopsis thaliana (Mouse-ear cress), this protein is Protein transport protein SEC24 C.